The chain runs to 323 residues: Octaprenyl diphosphate synthase (323 aa).

The isopentenyl diphosphate site is built by Lys-45, Arg-48, and His-77. Residues Asp-84 and Asp-88 each coordinate Mg(2+). Arg-93 is an an all-trans-polyprenyl diphosphate binding site. Position 94 (Arg-94) interacts with isopentenyl diphosphate. An all-trans-polyprenyl diphosphate contacts are provided by Lys-170, Thr-171, and Gln-208.

Belongs to the FPP/GGPP synthase family. Mg(2+) is required as a cofactor.

The enzyme catalyses 5 isopentenyl diphosphate + (2E,6E)-farnesyl diphosphate = all-trans-octaprenyl diphosphate + 5 diphosphate. Its function is as follows. Supplies octaprenyl diphosphate, the precursor for the side chain of the isoprenoid quinones ubiquinone and menaquinone. This Escherichia coli (strain K12) protein is Octaprenyl diphosphate synthase (ispB).